The chain runs to 235 residues: Probable transcriptional regulatory protein Ccon26_04940 (235 aa).

Belongs to the TACO1 family.

It is found in the cytoplasm. The protein is Probable transcriptional regulatory protein Ccon26_04940 of Campylobacter concisus (strain 13826).